Reading from the N-terminus, the 165-residue chain is Nucleotide-binding protein Syncc9902_1708 (165 aa).

The protein belongs to the YajQ family.

Its function is as follows. Nucleotide-binding protein. The protein is Nucleotide-binding protein Syncc9902_1708 of Synechococcus sp. (strain CC9902).